Here is a 466-residue protein sequence, read N- to C-terminus: Asparagine--tRNA ligase (466 aa).

This sequence belongs to the class-II aminoacyl-tRNA synthetase family. In terms of assembly, homodimer.

It is found in the cytoplasm. It carries out the reaction tRNA(Asn) + L-asparagine + ATP = L-asparaginyl-tRNA(Asn) + AMP + diphosphate + H(+). The protein is Asparagine--tRNA ligase of Shewanella amazonensis (strain ATCC BAA-1098 / SB2B).